The following is a 196-amino-acid chain: Agamous-like MADS-box protein AGL70 (196 aa).

The 61-residue stretch at 1-61 (MGRRKVEIKR…GKLYDSASGD (61 aa)) folds into the MADS-box domain. The short motif at 8 to 15 (IKRIENKS) is the Nuclear localization signal element. The region spanning 80-170 (ALDLAEKIRN…ASQVGKKTFL (91 aa)) is the K-box domain.

In terms of tissue distribution, mostly expressed in roots, leaves and flowers, and, to a lower extent, in inflorescence, siliques, pollen and shoots.

The protein localises to the nucleus. In terms of biological role, probable transcription factor involved in the negative regulation of flowering time, probably through the photoperiodic and vernalization pathways; more efficient in cv. Landsberg erecta than in cv. Columbia background. Prevents premature flowering. Involved in the modulation of vernalization impact on flowering according to genotype acclimation to altitude. The polypeptide is Agamous-like MADS-box protein AGL70 (Arabidopsis thaliana (Mouse-ear cress)).